Here is a 199-residue protein sequence, read N- to C-terminus: Large ribosomal subunit protein uL4 (199 aa).

Belongs to the universal ribosomal protein uL4 family. Part of the 50S ribosomal subunit.

Its function is as follows. One of the primary rRNA binding proteins, this protein initially binds near the 5'-end of the 23S rRNA. It is important during the early stages of 50S assembly. It makes multiple contacts with different domains of the 23S rRNA in the assembled 50S subunit and ribosome. Functionally, forms part of the polypeptide exit tunnel. This Aquifex pyrophilus protein is Large ribosomal subunit protein uL4.